An 80-amino-acid polypeptide reads, in one-letter code: Cell division protein ZapB (80 aa).

Positions 3 to 80 (FEVFEKLEAK…ALLGKMNEVN (78 aa)) form a coiled coil.

The protein belongs to the ZapB family. As to quaternary structure, homodimer. The ends of the coiled-coil dimer bind to each other, forming polymers. Interacts with FtsZ.

It is found in the cytoplasm. Non-essential, abundant cell division factor that is required for proper Z-ring formation. It is recruited early to the divisome by direct interaction with FtsZ, stimulating Z-ring assembly and thereby promoting cell division earlier in the cell cycle. Its recruitment to the Z-ring requires functional FtsA or ZipA. The sequence is that of Cell division protein ZapB from Edwardsiella ictaluri (strain 93-146).